The following is a 420-amino-acid chain: MAPK/MAK/MRK overlapping kinase (420 aa).

Positions 4–285 (YKAIGKIGEG…AHQALQHPYF (282 aa)) constitute a Protein kinase domain. ATP-binding positions include 10 to 18 (IGEGTFSEV) and K33. D128 acts as the Proton acceptor in catalysis. Over residues 311–322 (PESSSHNWSFSQ) the composition is skewed to polar residues. The disordered stretch occupies residues 311–344 (PESSSHNWSFSQEGRKQKQSLRHEEGHARRQGPT). The span at 323–338 (EGRKQKQSLRHEEGHA) shows a compositional bias: basic and acidic residues.

Belongs to the protein kinase superfamily. CMGC Ser/Thr protein kinase family. CDC2/CDKX subfamily. Requires Mg(2+) as cofactor. In terms of processing, autophosphorylated. As to expression, highly expressed in testis, and less in kidney, brain and lung.

Its subcellular location is the cytoplasm. It is found in the cell projection. The protein resides in the cilium. It localises to the nucleus. The enzyme catalyses L-seryl-[protein] + ATP = O-phospho-L-seryl-[protein] + ADP + H(+). It carries out the reaction L-threonyl-[protein] + ATP = O-phospho-L-threonyl-[protein] + ADP + H(+). Its activity is regulated as follows. Phosphorylation appears to increase the enzymatic activity. In terms of biological role, able to phosphorylate several exogenous substrates and to undergo autophosphorylation. Negatively regulates cilium length in a cAMP and mTORC1 signaling-dependent manner. This Mus musculus (Mouse) protein is MAPK/MAK/MRK overlapping kinase (Mok).